The chain runs to 188 residues: MKQQANLIRAGQVIEHDGRRWTVLKQQIITPGKGGAFIQVEMRDLKTGNKTNERWRTADSVERLVTEDKDYTYSYMDGDNVVLMDPETFEQLILAKDIFGDQFAFLQDNMPLNVKLVEGDPVGVELPPHVTLEVTEADPVVKGQTASSSYKPAMLSNGVKTLVPPFIEAGERIVVRTEDGSYVERAKD.

This sequence belongs to the elongation factor P family.

It is found in the cytoplasm. It functions in the pathway protein biosynthesis; polypeptide chain elongation. In terms of biological role, involved in peptide bond synthesis. Stimulates efficient translation and peptide-bond synthesis on native or reconstituted 70S ribosomes in vitro. Probably functions indirectly by altering the affinity of the ribosome for aminoacyl-tRNA, thus increasing their reactivity as acceptors for peptidyl transferase. This is Elongation factor P from Gluconobacter oxydans (strain 621H) (Gluconobacter suboxydans).